The chain runs to 167 residues: Small ribosomal subunit protein uS5 (167 aa).

The region spanning 19–82 is the S5 DRBM domain; that stretch reads LTEKVLHINR…EAARKNMISC (64 aa).

It belongs to the universal ribosomal protein uS5 family. In terms of assembly, part of the 30S ribosomal subunit. Contacts proteins S4 and S8.

Functionally, with S4 and S12 plays an important role in translational accuracy. Located at the back of the 30S subunit body where it stabilizes the conformation of the head with respect to the body. The chain is Small ribosomal subunit protein uS5 from Protochlamydia amoebophila (strain UWE25).